A 217-amino-acid chain; its full sequence is 25 kDa ookinete surface antigen (217 aa).

Residues methionine 1–serine 16 form the signal peptide. Positions cysteine 30–glutamate 59 constitute an EGF-like 1; truncated domain. EGF-like domains lie at lysine 61–isoleucine 106, isoleucine 106–serine 150, and glycine 153–threonine 193. 9 disulfide bridges follow: cysteine 65-cysteine 80, cysteine 74-cysteine 92, cysteine 94-cysteine 105, cysteine 110-cysteine 120, cysteine 115-cysteine 133, cysteine 135-cysteine 149, cysteine 157-cysteine 168, cysteine 161-cysteine 177, and cysteine 179-cysteine 192. N-linked (GlcNAc...) asparagine glycosylation occurs at asparagine 112. Residues asparagine 165 and asparagine 187 are each glycosylated (N-linked (GlcNAc...) asparagine). Serine 196 is lipidated: GPI-anchor amidated serine. The propeptide at valine 197–methionine 217 is removed in mature form. An N-linked (GlcNAc...) asparagine glycan is attached at asparagine 202.

The protein localises to the cell membrane. In Plasmodium reichenowi, this protein is 25 kDa ookinete surface antigen.